A 527-amino-acid polypeptide reads, in one-letter code: MTHNDDDHKWVTTKRKEPIFFTVILFIFQIFMIICFAALTGYDTNKNYTGSENPDEFKGGEVQERVNNFYGYFRDINIMIFFGFGFLMTFLRRYGYSALGYTFIISALVSQWSVLLNGFFEAWSHSNKHGEFPSTWEFSMDSLLQGFFCSGSVMISYGAILGRVTPLHMLIMGIIEPIFFFLNVFIGEMNLEAIDVGGGMYIHLFGSVFGLTVAWFLTDRKSKECTDNAPSYSGDNFAMAGTLFLWMMWPSFNAAIAPLGEPQFRAIANTFLSLTGSTVATFIVSRLFSHLGNKLDMVHVQNSSLAGGVVQGCIAHMNINPGGAIAMGFIAGTISVCGYLFITPKVQRKLHIQDTCGILNLHCIPGFLGSIAAIFAAIKGLNNPNMYSKVEFEQIFRAGDSQASANLIATMVSIGLGIVGGLLVGVILLQLKKIKGLKSKEYYQDSAFWILPIDYPKDVATVVALNNAATSEDTAGGDDEEEGVGKEHGAVEMGKHNRIVQPKQDNKYHKQLPSDDEEEDEFKQEPI.

Over 1–18 (MTHNDDDHKWVTTKRKEP) the chain is Cytoplasmic. The helical transmembrane segment at 19–39 (IFFTVILFIFQIFMIICFAAL) threads the bilayer. At 40-70 (TGYDTNKNYTGSENPDEFKGGEVQERVNNFY) the chain is on the extracellular side. A glycan (N-linked (GlcNAc...) asparagine) is linked at N47. Residues 71–91 (GYFRDINIMIFFGFGFLMTFL) traverse the membrane as a helical segment. At 92-99 (RRYGYSAL) the chain is on the cytoplasmic side. Residues 100–120 (GYTFIISALVSQWSVLLNGFF) traverse the membrane as a helical segment. At 121-141 (EAWSHSNKHGEFPSTWEFSMD) the chain is on the extracellular side. The helical transmembrane segment at 142-162 (SLLQGFFCSGSVMISYGAILG) threads the bilayer. Residues 163–166 (RVTP) lie on the Cytoplasmic side of the membrane. A helical transmembrane segment spans residues 167–187 (LHMLIMGIIEPIFFFLNVFIG). Over 188–195 (EMNLEAID) the chain is Extracellular. Residues 196-216 (VGGGMYIHLFGSVFGLTVAWF) form a helical membrane-spanning segment. Over 217–236 (LTDRKSKECTDNAPSYSGDN) the chain is Cytoplasmic. Residues 237 to 257 (FAMAGTLFLWMMWPSFNAAIA) traverse the membrane as a helical segment. The Extracellular portion of the chain corresponds to 258 to 263 (PLGEPQ). Residues 264-284 (FRAIANTFLSLTGSTVATFIV) traverse the membrane as a helical segment. Topologically, residues 285-299 (SRLFSHLGNKLDMVH) are cytoplasmic. Residues 300 to 319 (VQNSSLAGGVVQGCIAHMNI) form a helical membrane-spanning segment. The Extracellular segment spans residues 320 to 321 (NP). The chain crosses the membrane as a helical span at residues 322–342 (GGAIAMGFIAGTISVCGYLFI). The Cytoplasmic segment spans residues 343-357 (TPKVQRKLHIQDTCG). A helical transmembrane segment spans residues 358 to 378 (ILNLHCIPGFLGSIAAIFAAI). Over 379–406 (KGLNNPNMYSKVEFEQIFRAGDSQASAN) the chain is Extracellular. The chain crosses the membrane as a helical span at residues 407–427 (LIATMVSIGLGIVGGLLVGVI). Over 428 to 527 (LLQLKKIKGL…EEDEFKQEPI (100 aa)) the chain is Cytoplasmic. Residues 471–527 (SEDTAGGDDEEEGVGKEHGAVEMGKHNRIVQPKQDNKYHKQLPSDDEEEDEFKQEPI) form a disordered region. Basic and acidic residues predominate over residues 483 to 495 (GVGKEHGAVEMGK). Positions 514-527 (SDDEEEDEFKQEPI) are enriched in acidic residues.

The protein belongs to the ammonium transporter (TC 2.A.49) family. Rh subfamily. Interacts with ap1g1.

It localises to the contractile vacuole. The protein localises to the membrane. Its function is as follows. May be a carbon dioxide/bicarbonate transporter. This is Rhesus-like glycoprotein A (rhgA) from Dictyostelium discoideum (Social amoeba).